The primary structure comprises 124 residues: MANPTQPLPNQWNEMWLVAFGAVPGALVRWQVQNDLLVNVIGAAILGLVVGLPFRPSRQLLLGVGFCGSLTTFSSWMVECSTLISQGAWLSALGLIGLTMGLGLGVAALGFLIGWQFRPSGLGR.

Transmembrane regions (helical) follow at residues L8 to V28, N34 to F54, L60 to C80, and L93 to I113. Na(+)-binding residues include G68 and T71.

Belongs to the fluoride channel Fluc/FEX (TC 1.A.43) family.

It localises to the cell inner membrane. It catalyses the reaction fluoride(in) = fluoride(out). Its activity is regulated as follows. Na(+) is not transported, but it plays an essential structural role and its presence is essential for fluoride channel function. Fluoride-specific ion channel. Important for reducing fluoride concentration in the cell, thus reducing its toxicity. The chain is Fluoride-specific ion channel FluC 2 from Prochlorococcus marinus (strain MIT 9313).